Reading from the N-terminus, the 457-residue chain is Proton extrusion protein PxcA (457 aa).

4 helical membrane passes run 239 to 259 (FILLLIIVPLLTHQLTKTFFL), 332 to 352 (INAISNVFADIFSLIAFGVVI), 368 to 390 (GILYSLSDSAKAFLIILFTDMFV), and 417 to 437 (FNFLFIATFPVILDTVLKYWI).

This sequence belongs to the CemA family.

It localises to the cell inner membrane. Required for H(+) efflux immediately after light irradiation to form a rapid H(+) concentration gradient across the thylakoid membranes. Together with PxcL, contributes to transient H(+) uptake following dark to light transition. The chain is Proton extrusion protein PxcA from Gloeothece citriformis (strain PCC 7424) (Cyanothece sp. (strain PCC 7424)).